Consider the following 133-residue polypeptide: Small ribosomal subunit protein bS16 (133 aa).

Residues 99 to 133 (EKWQQNQTERRQKRLAVKTRRRQAKKAAEAKGAEA) form a disordered region. The span at 109-123 (RQKRLAVKTRRRQAK) shows a compositional bias: basic residues. Positions 124 to 133 (KAAEAKGAEA) are enriched in basic and acidic residues.

This sequence belongs to the bacterial ribosomal protein bS16 family.

The chain is Small ribosomal subunit protein bS16 from Chlorobium limicola (strain DSM 245 / NBRC 103803 / 6330).